Here is a 380-residue protein sequence, read N- to C-terminus: Cytochrome b (380 aa).

The next 4 helical transmembrane spans lie at 33–53 (FGSL…FLAM), 77–98 (WLIR…FLHV), 113–133 (WNMG…GYVL), and 178–198 (FFAF…VHLL). Heme b contacts are provided by His-83 and His-97. Heme b-binding residues include His-182 and His-196. Position 201 (His-201) interacts with a ubiquinone. A run of 4 helical transmembrane segments spans residues 226 to 246 (IKDF…VLFF), 288 to 308 (LGGV…PLLH), 320 to 340 (ITQT…WIGG), and 347 to 367 (FIMI…IFMP).

It belongs to the cytochrome b family. As to quaternary structure, the cytochrome bc1 complex contains 11 subunits: 3 respiratory subunits (MT-CYB, CYC1 and UQCRFS1), 2 core proteins (UQCRC1 and UQCRC2) and 6 low-molecular weight proteins (UQCRH/QCR6, UQCRB/QCR7, UQCRQ/QCR8, UQCR10/QCR9, UQCR11/QCR10 and a cleavage product of UQCRFS1). This cytochrome bc1 complex then forms a dimer. Heme b is required as a cofactor.

The protein localises to the mitochondrion inner membrane. Its function is as follows. Component of the ubiquinol-cytochrome c reductase complex (complex III or cytochrome b-c1 complex) that is part of the mitochondrial respiratory chain. The b-c1 complex mediates electron transfer from ubiquinol to cytochrome c. Contributes to the generation of a proton gradient across the mitochondrial membrane that is then used for ATP synthesis. The chain is Cytochrome b (MT-CYB) from Chionomys roberti (Robert's snow vole).